A 402-amino-acid chain; its full sequence is F-box protein At4g22390 (402 aa).

One can recognise an F-box domain in the interval 1 to 49 (MAECPTDLINEMFLRLRATTLVKCRVLSKPCFSLIDSPEFVSSHLRRRL).

The polypeptide is F-box protein At4g22390 (Arabidopsis thaliana (Mouse-ear cress)).